The chain runs to 629 residues: tRNA uridine 5-carboxymethylaminomethyl modification enzyme MnmG (629 aa).

FAD-binding positions include 13-18, Val-125, and Ser-180; that span reads GGGHAG. 273-287 is a binding site for NAD(+); the sequence is GPRYCPSIEDKVMRF. Residue Gln-370 coordinates FAD.

Belongs to the MnmG family. Homodimer. Heterotetramer of two MnmE and two MnmG subunits. FAD is required as a cofactor.

The protein localises to the cytoplasm. In terms of biological role, NAD-binding protein involved in the addition of a carboxymethylaminomethyl (cmnm) group at the wobble position (U34) of certain tRNAs, forming tRNA-cmnm(5)s(2)U34. This chain is tRNA uridine 5-carboxymethylaminomethyl modification enzyme MnmG, found in Salmonella typhi.